We begin with the raw amino-acid sequence, 504 residues long: Maturase K (504 aa).

The protein belongs to the intron maturase 2 family. MatK subfamily.

It localises to the plastid. Its subcellular location is the chloroplast. Its function is as follows. Usually encoded in the trnK tRNA gene intron. Probably assists in splicing its own and other chloroplast group II introns. The polypeptide is Maturase K (Olimarabidopsis pumila (Dwarf rocket)).